A 387-amino-acid chain; its full sequence is Patatin-02 (387 aa).

The first 23 residues, 1 to 23 (MATTKSFLILIVMILATTSSTFA), serve as a signal peptide directing secretion. The region spanning 32–230 (LSIDGGGIKG…TVADPALLSV (199 aa)) is the PNPLA domain. The GXGXXG motif lies at 36-41 (GGGIKG). The GXSXG signature appears at 75-79 (GTSTG). Ser77 functions as the Nucleophile in the catalytic mechanism. Residue Asn115 is glycosylated (N-linked (GlcNAc...) asparagine). Residue Asp216 is the Proton acceptor of the active site. A DGA/G motif is present at residues 216–218 (DGA). The stretch at 361–385 (ETYEEALKRFAKLLSDRKKLRANKA) forms a coiled coil.

This sequence belongs to the patatin family. In terms of tissue distribution, tuber and stolon.

The protein resides in the vacuole. Probable lipolytic acyl hydrolase (LAH), an activity which is thought to be involved in the response of tubers to pathogens. In Solanum tuberosum (Potato), this protein is Patatin-02.